The primary structure comprises 288 residues: Large ribosomal subunit protein uL2 (288 aa).

Positions proline 29–arginine 43 are enriched in basic and acidic residues. Disordered regions lie at residues proline 29–lysine 59 and glycine 210–serine 288. Basic residues-rich tracts occupy residues glycine 210–valine 221 and valine 272–serine 288.

The protein belongs to the universal ribosomal protein uL2 family. As to quaternary structure, part of the 50S ribosomal subunit. Forms a bridge to the 30S subunit in the 70S ribosome.

One of the primary rRNA binding proteins. Required for association of the 30S and 50S subunits to form the 70S ribosome, for tRNA binding and peptide bond formation. It has been suggested to have peptidyltransferase activity; this is somewhat controversial. Makes several contacts with the 16S rRNA in the 70S ribosome. The polypeptide is Large ribosomal subunit protein uL2 (Thermosynechococcus vestitus (strain NIES-2133 / IAM M-273 / BP-1)).